Reading from the N-terminus, the 122-residue chain is Large ribosomal subunit protein uL14 (122 aa).

The protein belongs to the universal ribosomal protein uL14 family. In terms of assembly, part of the 50S ribosomal subunit. Forms a cluster with proteins L3 and L19. In the 70S ribosome, L14 and L19 interact and together make contacts with the 16S rRNA in bridges B5 and B8.

Its function is as follows. Binds to 23S rRNA. Forms part of two intersubunit bridges in the 70S ribosome. This is Large ribosomal subunit protein uL14 from Rhodopirellula baltica (strain DSM 10527 / NCIMB 13988 / SH1).